We begin with the raw amino-acid sequence, 292 residues long: Ribosomal protein L11 methyltransferase (292 aa).

Positions 143, 164, 186, and 228 each coordinate S-adenosyl-L-methionine.

The protein belongs to the methyltransferase superfamily. PrmA family.

The protein resides in the cytoplasm. The enzyme catalyses L-lysyl-[protein] + 3 S-adenosyl-L-methionine = N(6),N(6),N(6)-trimethyl-L-lysyl-[protein] + 3 S-adenosyl-L-homocysteine + 3 H(+). In terms of biological role, methylates ribosomal protein L11. In Aeromonas salmonicida (strain A449), this protein is Ribosomal protein L11 methyltransferase.